Here is a 603-residue protein sequence, read N- to C-terminus: Adenine deaminase (603 aa).

This sequence belongs to the metallo-dependent hydrolases superfamily. Adenine deaminase family. The cofactor is Mn(2+).

The enzyme catalyses adenine + H2O + H(+) = hypoxanthine + NH4(+). The chain is Adenine deaminase from Ruegeria pomeroyi (strain ATCC 700808 / DSM 15171 / DSS-3) (Silicibacter pomeroyi).